The following is a 228-amino-acid chain: Trichome differentiation protein GL1 (228 aa).

HTH myb-type domains follow at residues 11–63 (NQEY…MNYL) and 64–118 (SPNV…SKKL). 2 DNA-binding regions (H-T-H motif) span residues 39 to 63 (WNRI…MNYL) and 91 to 114 (WSLI…NTHL).

Homodimer and heterodimer with MYB82. Interacts directly with GL3 and BHLH2. Part of a complex made of GL1, GL3 or BHLH2, and TTG1. Also interacts with BHLH2/EGL3/MYC146 and BHLH12/MYC1. Interacts with MYB82. Expressed in leaves, stems and flowers. Expressed in trichome cells and in leaf primordia.

Its subcellular location is the nucleus. In terms of biological role, transcription activator, when associated with BHLH2/EGL3/MYC146 or BHLH12/MYC1. Involved in epidermal cell fate specification in leaves. Together with TTG1 and GL3, promotes trichome formation and endoreplication. Regulates the production of a signal that induces hair (trichome) precursor cells on leaf primordia to differentiate. Binds to the WER-binding sites (WBS) promoter regions and activates the transcription of target genes. In Arabidopsis thaliana (Mouse-ear cress), this protein is Trichome differentiation protein GL1.